Consider the following 243-residue polypeptide: UPF0246 protein SAG2081 (243 aa).

Belongs to the UPF0246 family.

The protein is UPF0246 protein SAG2081 of Streptococcus agalactiae serotype V (strain ATCC BAA-611 / 2603 V/R).